Here is a 437-residue protein sequence, read N- to C-terminus: MTANNLREQISQLVAQYANEALSPKPFVAGTSVVPPSGKVIGAKELQLMVEASLDGWLTTGRFNDAFEKKLGEFIGVPHVLTTTSGSSANLLALTALTSPKLGERALKPGDEVITVAAGFPTTVNPAIQNGLIPVFVDVDIPTYNIDASLIEAAVTEKSKAIMIAHTLGNAFNLSEVRRIADKYNLWLIEDCCDALGTTYEGQMVGTFGDIGTVSFYPAHHITMGEGGAVFTKSGELKKIIESFRDWGRDCYCAPGCDNTCGKRFGQQLGSLPQGYDHKYTYSHLGYNLKITDMQAACGLAQLERVEEFVEQRKANFSYLKQGLQSCTEFLELPEATEKSDPSWFGFPITLKETSGVNRVELVKFLDEAKIGTRLLFAGNLIRQPYFANVKYRVVGELTNTDRIMNQTFWIGIYPGLTTEHLDYVVSKFEEFFGLNF.

The protein belongs to the DegT/DnrJ/EryC1 family. It depends on pyridoxal 5'-phosphate as a cofactor.

Its pathway is bacterial outer membrane biogenesis; LPS O-antigen biosynthesis. This chain is Lipopolysaccharide biosynthesis protein RfbH (rfbH), found in Salmonella typhimurium (strain LT2 / SGSC1412 / ATCC 700720).